We begin with the raw amino-acid sequence, 60 residues long: UPF0337 protein SAV1625 (60 aa).

Residues 18 to 41 are disordered; sequence VGNVTDNKELEKEGQQDKATGKAK. The segment covering 23–41 has biased composition (basic and acidic residues); sequence DNKELEKEGQQDKATGKAK.

This sequence belongs to the UPF0337 (CsbD) family.

The polypeptide is UPF0337 protein SAV1625 (Staphylococcus aureus (strain Mu50 / ATCC 700699)).